A 332-amino-acid chain; its full sequence is Ribose operon repressor (332 aa).

An HTH lacI-type domain is found at 2–56; that stretch reads ATMKDIARLAQVSTSTVSHVINGSRFVSDEIREKVMRIVAELNYTPSAVARSLKV. The segment at residues 4-23 is a DNA-binding region (H-T-H motif); that stretch reads MKDIARLAQVSTSTVSHVIN.

In terms of biological role, transcriptional repressor for the ribose rbsDACBK operon. This Haemophilus influenzae (strain ATCC 51907 / DSM 11121 / KW20 / Rd) protein is Ribose operon repressor (rbsR).